Reading from the N-terminus, the 789-residue chain is DNA topoisomerase 4 subunit A (789 aa).

The Topo IIA-type catalytic domain maps to 34–499 (LPDLRDGLKP…EKQKVQDSDF (466 aa)). Tyr-122 functions as the O-(5'-phospho-DNA)-tyrosine intermediate in the catalytic mechanism.

This sequence belongs to the type II topoisomerase GyrA/ParC subunit family. ParC type 2 subfamily. As to quaternary structure, heterotetramer composed of ParC and ParE.

It is found in the cell membrane. It catalyses the reaction ATP-dependent breakage, passage and rejoining of double-stranded DNA.. Topoisomerase IV is essential for chromosome segregation. It relaxes supercoiled DNA. Performs the decatenation events required during the replication of a circular DNA molecule. The chain is DNA topoisomerase 4 subunit A from Mycoplasma pneumoniae (strain ATCC 29342 / M129 / Subtype 1) (Mycoplasmoides pneumoniae).